Here is a 425-residue protein sequence, read N- to C-terminus: Inner membrane protein YqcE (425 aa).

The Cytoplasmic segment spans residues M1 to R8. Residues W9–R29 traverse the membrane as a helical segment. The Periplasmic portion of the chain corresponds to Y30–G48. A helical transmembrane segment spans residues L49 to A69. Residues D70–R75 lie on the Cytoplasmic side of the membrane. 2 helical membrane passes run K76 to P96 and P97 to W117. The Cytoplasmic portion of the chain corresponds to S118–G138. Residues W139–F159 form a helical membrane-spanning segment. Over S160–K171 the chain is Periplasmic. Residues T172 to V192 traverse the membrane as a helical segment. Topologically, residues S193–R219 are cytoplasmic. Residues I220–L240 traverse the membrane as a helical segment. Over S241–S259 the chain is Periplasmic. Residues Y260–I280 traverse the membrane as a helical segment. Topologically, residues T281–R291 are cytoplasmic. Residues V292–S312 form a helical membrane-spanning segment. N313 is a topological domain (periplasmic). Residues P314–S334 traverse the membrane as a helical segment. Residues R335–T354 lie on the Cytoplasmic side of the membrane. The chain crosses the membrane as a helical span at residues T355–G375. At H376–R388 the chain is on the periplasmic side. The helical transmembrane segment at N389–F409 threads the bilayer. Residues Q410–K425 are Cytoplasmic-facing.

This sequence to E.coli YihN.

Its subcellular location is the cell inner membrane. This Escherichia coli (strain K12) protein is Inner membrane protein YqcE (yqcE).